We begin with the raw amino-acid sequence, 304 residues long: Non-specific ribonucleoside hydrolase RihC (304 aa).

Residue His-233 is part of the active site.

It belongs to the IUNH family. RihC subfamily.

In terms of biological role, hydrolyzes both purine and pyrimidine ribonucleosides with a broad-substrate specificity. This is Non-specific ribonucleoside hydrolase RihC from Escherichia coli O6:H1 (strain CFT073 / ATCC 700928 / UPEC).